An 89-amino-acid polypeptide reads, in one-letter code: Small ribosomal subunit protein uS15 (89 aa).

It belongs to the universal ribosomal protein uS15 family. In terms of assembly, part of the 30S ribosomal subunit. Forms a bridge to the 50S subunit in the 70S ribosome, contacting the 23S rRNA.

Functionally, one of the primary rRNA binding proteins, it binds directly to 16S rRNA where it helps nucleate assembly of the platform of the 30S subunit by binding and bridging several RNA helices of the 16S rRNA. Forms an intersubunit bridge (bridge B4) with the 23S rRNA of the 50S subunit in the ribosome. The chain is Small ribosomal subunit protein uS15 from Brevibacillus brevis (strain 47 / JCM 6285 / NBRC 100599).